The following is a 201-amino-acid chain: UPF0301 protein Arad_1256 (201 aa).

This sequence belongs to the UPF0301 (AlgH) family.

The sequence is that of UPF0301 protein Arad_1256 from Rhizobium rhizogenes (strain K84 / ATCC BAA-868) (Agrobacterium radiobacter).